Reading from the N-terminus, the 861-residue chain is Leucine--tRNA ligase (861 aa).

The 'HIGH' region motif lies at 42–52; it reads PYPSGRLHMGH. The short motif at 619–623 is the 'KMSKS' region element; it reads KMSKS. Lysine 622 lines the ATP pocket.

The protein belongs to the class-I aminoacyl-tRNA synthetase family.

The protein resides in the cytoplasm. The catalysed reaction is tRNA(Leu) + L-leucine + ATP = L-leucyl-tRNA(Leu) + AMP + diphosphate. This chain is Leucine--tRNA ligase, found in Haemophilus influenzae (strain PittEE).